Reading from the N-terminus, the 475-residue chain is Phosphoethanolamine N-methyltransferase 1 (475 aa).

It belongs to the class I-like SAM-binding methyltransferase superfamily.

It carries out the reaction phosphoethanolamine + S-adenosyl-L-methionine = N-methylethanolamine phosphate + S-adenosyl-L-homocysteine + H(+). It participates in phospholipid metabolism; phosphatidylcholine biosynthesis; phosphocholine from phosphoethanolamine. With respect to regulation, feedback inhibition by phosphatidylcholine. Its function is as follows. Catalyzes the first step in the synthesis of phosphocholine by converting phosphoethanolamine into phospho-monomethylethanolamine (N-methylethanolamine phosphate). Phosphocholine is a precursor for phosphatidylcholine, a major component in membranes and a precursor itself in the production of glycoconjugates secreted by parasitic nematodes to avoid host immune responses. The chain is Phosphoethanolamine N-methyltransferase 1 from Caenorhabditis elegans.